The primary structure comprises 179 residues: ADP-ribosylation factor (179 aa).

Gly2 carries the N-myristoyl glycine lipid modification. GTP-binding positions include 24-31, 67-71, and 126-129; these read GLDAAGKT, DVGGQ, and NKQD.

It belongs to the small GTPase superfamily. Arf family.

It localises to the golgi apparatus. GTP-binding protein involved in protein trafficking; may modulate vesicle budding and uncoating within the Golgi apparatus. This is ADP-ribosylation factor (ARF1) from Candida albicans (strain SC5314 / ATCC MYA-2876) (Yeast).